A 263-amino-acid chain; its full sequence is Isoprenyl transferase (263 aa).

Residue aspartate 26 is part of the active site. Aspartate 26 is a binding site for Mg(2+). Residues glycine 27 to arginine 30, tryptophan 31, arginine 39, histidine 43, and serine 71 to glutamate 73 each bind substrate. Catalysis depends on asparagine 74, which acts as the Proton acceptor. Substrate contacts are provided by residues tryptophan 75, arginine 77, arginine 191, and arginine 197–serine 199. Position 210 (glutamate 210) interacts with Mg(2+). A disordered region spans residues glycine 241–valine 263. Over residues threonine 243–valine 263 the composition is skewed to polar residues.

This sequence belongs to the UPP synthase family. Homodimer. Requires Mg(2+) as cofactor.

Catalyzes the condensation of isopentenyl diphosphate (IPP) with allylic pyrophosphates generating different type of terpenoids. In Nitrosomonas europaea (strain ATCC 19718 / CIP 103999 / KCTC 2705 / NBRC 14298), this protein is Isoprenyl transferase.